The following is a 432-amino-acid chain: Sphingosine N-acyltransferase-like protein ALT7 (432 aa).

Residues 55–75 (IGLSLGSLLLLILMFTCLPYY) traverse the membrane as a helical segment. N-linked (GlcNAc...) asparagine glycosylation occurs at Asn77. 7 helical membrane-spanning segments follow: residues 91–111 (FIFSGVVLFTALRAISMIYLL), 128–148 (FTEQGWLVIHHSLFWTTGMYI), 172–192 (GLTKGYYLLQLAFWLQQIVVV), 226–246 (VGNVILCLVDIVDVLFAFAKL), 250–270 (LGFQYACDVAFCVFLASWLVA), 273–293 (GLYLLVCWSIFTILPTVMPYG), and 338–358 (AFLGLLVGLQVLMLIWLGMIL). One can recognise a TLC domain in the interval 123–366 (KLMVRFTEQG…ILKVAYKVFQ (244 aa)). The segment at 370 to 395 (ADDTRSDSEESGYGTSDHEGDCYGAQ) is disordered.

This sequence belongs to the sphingosine N-acyltransferase family.

It is found in the membrane. It participates in mycotoxin biosynthesis. Sphingosine N-acyltransferase-like protein; part of the gene cluster that mediates the biosynthesis of the host-selective toxins (HSTs) AAL-toxins, sphinganine-analog mycotoxins responsible for Alternaria stem canker on tomato by the tomato pathotype. The biosynthesis starts with the polyketide synthase ALT1-catalyzed C-16 carbon chain assembly from one starter acetyl-CoA unit with malonyl-CoA extender units. ALT1 also selectively transfers methyl groups at the first and the third cycle of chain elongation for AAL toxin. The C-16 polyketide chain is released from the enzyme by a nucleophilic attack of a carbanion, which is derived from R-carbon of glycin by decarboxylation, on the carbonyl carbon of polyketide acyl chain. This step is probably catalyzed by a pyridoxal 5'-phosphate-dependent aminoacyl transferase ALT4. The respective functions of the other enzymes encoded by the cluster have still to be elucidated. The sphingosine N-acyltransferase-like protein ALT7 seems not to act as a resistance/self-tolerance factor against the toxin in the toxin biosynthetic gene cluster, contrary to what is expected. In Alternaria alternata (Alternaria rot fungus), this protein is Sphingosine N-acyltransferase-like protein ALT7.